The sequence spans 275 residues: tRNA (guanine-N(1)-)-methyltransferase (275 aa).

S-adenosyl-L-methionine-binding positions include Gly124 and 149 to 154 (IGDYVL).

It belongs to the RNA methyltransferase TrmD family. As to quaternary structure, homodimer.

It localises to the cytoplasm. The catalysed reaction is guanosine(37) in tRNA + S-adenosyl-L-methionine = N(1)-methylguanosine(37) in tRNA + S-adenosyl-L-homocysteine + H(+). Its function is as follows. Specifically methylates guanosine-37 in various tRNAs. This chain is tRNA (guanine-N(1)-)-methyltransferase, found in Bifidobacterium animalis subsp. lactis (strain AD011).